Consider the following 213-residue polypeptide: ATP-dependent dethiobiotin synthetase BioD (213 aa).

Position 13-18 (Gly-13–Val-18) interacts with ATP. Thr-17 lines the Mg(2+) pocket. The active site involves Lys-33. Glu-100 is a binding site for Mg(2+). Residues Glu-100–Gly-103 and Pro-184–Leu-186 contribute to the ATP site.

This sequence belongs to the dethiobiotin synthetase family. As to quaternary structure, homodimer. Mg(2+) is required as a cofactor.

The protein resides in the cytoplasm. It catalyses the reaction (7R,8S)-7,8-diammoniononanoate + CO2 + ATP = (4R,5S)-dethiobiotin + ADP + phosphate + 3 H(+). It functions in the pathway cofactor biosynthesis; biotin biosynthesis; biotin from 7,8-diaminononanoate: step 1/2. Functionally, catalyzes a mechanistically unusual reaction, the ATP-dependent insertion of CO2 between the N7 and N8 nitrogen atoms of 7,8-diaminopelargonic acid (DAPA, also called 7,8-diammoniononanoate) to form a ureido ring. The protein is ATP-dependent dethiobiotin synthetase BioD of Rhodopseudomonas palustris (strain HaA2).